A 526-amino-acid polypeptide reads, in one-letter code: GMP synthase [glutamine-hydrolyzing] (526 aa).

A Glutamine amidotransferase type-1 domain is found at 4-202 (KILILDFGSQ…VHDICGCDQS (199 aa)). Cysteine 81 (nucleophile) is an active-site residue. Active-site residues include histidine 176 and glutamate 178. One can recognise a GMPS ATP-PPase domain in the interval 203-395 (WNMPDYVETA…LGLPHDMVYR (193 aa)). 230–236 (SGGVDSS) provides a ligand contact to ATP.

As to quaternary structure, homodimer.

The catalysed reaction is XMP + L-glutamine + ATP + H2O = GMP + L-glutamate + AMP + diphosphate + 2 H(+). It functions in the pathway purine metabolism; GMP biosynthesis; GMP from XMP (L-Gln route): step 1/1. Its function is as follows. Catalyzes the synthesis of GMP from XMP. This is GMP synthase [glutamine-hydrolyzing] from Methylobacillus flagellatus (strain ATCC 51484 / DSM 6875 / VKM B-1610 / KT).